The chain runs to 314 residues: MRPLAIIGPTGSGKSQLALDVAERLAGEVPAEIVNADAMQLYRGMDIGTAKLSVAARRGIPHHQLDVLNVAETATVARYQQAAAADIEAIIARGHVPIVVGGSMLYVQSLLDNWSFPATDPAVRARWEECLAELGVGELHAELARRDPAAAATILPTDGRRIVRALEVIELTGQPFAASAPRIGAAQWGTAIIGLDCDTPILDDRLAVRTDSMFERGLVEEVRVLLRAGLRDGVTAARALGYAQVLAALDAGGGAELLDDAREQTYFGTRRYVRRQRSWFRRDHRVHWCDAGATGPSDRAAMVDEALRVWRHVT.

An ATP-binding site is contributed by 8 to 15 (GPTGSGKS). Residue 10–15 (TGSGKS) participates in substrate binding.

The protein belongs to the IPP transferase family. Monomer. Mg(2+) serves as cofactor.

The enzyme catalyses adenosine(37) in tRNA + dimethylallyl diphosphate = N(6)-dimethylallyladenosine(37) in tRNA + diphosphate. In terms of biological role, catalyzes the transfer of a dimethylallyl group onto the adenine at position 37 in tRNAs that read codons beginning with uridine, leading to the formation of N6-(dimethylallyl)adenosine (i(6)A). This is tRNA dimethylallyltransferase 2 from Mycobacterium marinum (strain ATCC BAA-535 / M).